The chain runs to 379 residues: Small ribosomal subunit protein uS2cy (379 aa).

Residues 1–94 are N-terminal extension; the sequence is MKLVQFFEIG…MGTSSNRAKS (94 aa). Residues 83 to 106 are disordered; sequence NQMGTSSNRAKSTDTPAVSTSQNV.

The protein belongs to the universal ribosomal protein uS2 family.

The protein localises to the plastid. It is found in the chloroplast. The sequence is that of Small ribosomal subunit protein uS2cy (rps2-2) from Tetradesmus obliquus (Green alga).